Reading from the N-terminus, the 202-residue chain is Ribonuclease HII (202 aa).

Residues 11–200 enclose the RNase H type-2 domain; sequence GLIAGVDEVG…VRKAIEEFNR (190 aa). Positions 17, 18, and 109 each coordinate a divalent metal cation.

This sequence belongs to the RNase HII family. The cofactor is Mn(2+). Requires Mg(2+) as cofactor.

It localises to the cytoplasm. It carries out the reaction Endonucleolytic cleavage to 5'-phosphomonoester.. Functionally, endonuclease that specifically degrades the RNA of RNA-DNA hybrids. The protein is Ribonuclease HII of Actinobacillus succinogenes (strain ATCC 55618 / DSM 22257 / CCUG 43843 / 130Z).